Reading from the N-terminus, the 675-residue chain is Heat shock 70 kDa protein 12A (675 aa).

The span at 1-13 shows a compositional bias: basic and acidic residues; that stretch reads MADKEAGGSDGPR. The tract at residues 1–45 is disordered; the sequence is MADKEAGGSDGPRETAPTSAYSSPARSLGDTGITPLSPSHIVNDT. Ala-2 carries the N-acetylalanine modification. Polar residues-rich tracts occupy residues 16–25 and 34–45; these read APTSAYSSPA and TPLSPSHIVNDT.

Belongs to the heat shock protein 70 family. In terms of assembly, interacts with SORL1 (via cytosolic C-terminus); this interaction affects SORL1 internalization and subcellular localization. In terms of tissue distribution, widely expressed with highest levels in brain, kidney and muscle.

Its subcellular location is the cytoplasm. The protein localises to the nucleus. Its function is as follows. Adapter protein for SORL1, but not SORT1. Delays SORL1 internalization and affects SORL1 subcellular localization. This is Heat shock 70 kDa protein 12A (HSPA12A) from Homo sapiens (Human).